The chain runs to 353 residues: Carbamoyl phosphate synthase small chain (353 aa).

Positions 1-166 (MSDAYLALET…AETHGNGDTT (166 aa)) are CPSase. Residues S45, G214, and G216 each contribute to the L-glutamine site. Positions 166–349 (TVALVDCGAK…LAMADASYTP (184 aa)) constitute a Glutamine amidotransferase type-1 domain. The active-site Nucleophile is the C241. Residues L242, Q245, N283, G285, and Y286 each coordinate L-glutamine. Residues H322 and E324 contribute to the active site.

It belongs to the CarA family. In terms of assembly, composed of two chains; the small (or glutamine) chain promotes the hydrolysis of glutamine to ammonia, which is used by the large (or ammonia) chain to synthesize carbamoyl phosphate. Tetramer of heterodimers (alpha,beta)4.

It catalyses the reaction hydrogencarbonate + L-glutamine + 2 ATP + H2O = carbamoyl phosphate + L-glutamate + 2 ADP + phosphate + 2 H(+). The catalysed reaction is L-glutamine + H2O = L-glutamate + NH4(+). Its pathway is amino-acid biosynthesis; L-arginine biosynthesis; carbamoyl phosphate from bicarbonate: step 1/1. The protein operates within pyrimidine metabolism; UMP biosynthesis via de novo pathway; (S)-dihydroorotate from bicarbonate: step 1/3. In terms of biological role, small subunit of the glutamine-dependent carbamoyl phosphate synthetase (CPSase). CPSase catalyzes the formation of carbamoyl phosphate from the ammonia moiety of glutamine, carbonate, and phosphate donated by ATP, constituting the first step of 2 biosynthetic pathways, one leading to arginine and/or urea and the other to pyrimidine nucleotides. The small subunit (glutamine amidotransferase) binds and cleaves glutamine to supply the large subunit with the substrate ammonia. This Halobacterium salinarum (strain ATCC 29341 / DSM 671 / R1) protein is Carbamoyl phosphate synthase small chain.